The chain runs to 521 residues: NAD(P)H-quinone oxidoreductase subunit 2 (521 aa).

The next 14 membrane-spanning stretches (helical) occupy residues 16–36 (ILPE…DLIG), 43–63 (WLPY…YTAW), 80–100 (LSIV…LMSI), 110–130 (LAEF…LSGA), 133–153 (LVMI…MTGY), 168–188 (LLIG…LYGL), 211–231 (LGLA…ISAV), 245–265 (PTPV…ALAI), 279–299 (WHLI…VVAL), 307–327 (MLAY…TAGT), 335–355 (VFYL…VILF), 379–399 (LGLS…GFFG), 401–421 (IYLF…LALV), and 467–487 (VGLV…NPLF).

The protein belongs to the complex I subunit 2 family. NDH-1 can be composed of about 15 different subunits; different subcomplexes with different compositions have been identified which probably have different functions.

The protein localises to the cellular thylakoid membrane. The catalysed reaction is a plastoquinone + NADH + (n+1) H(+)(in) = a plastoquinol + NAD(+) + n H(+)(out). The enzyme catalyses a plastoquinone + NADPH + (n+1) H(+)(in) = a plastoquinol + NADP(+) + n H(+)(out). NDH-1 shuttles electrons from an unknown electron donor, via FMN and iron-sulfur (Fe-S) centers, to quinones in the respiratory and/or the photosynthetic chain. The immediate electron acceptor for the enzyme in this species is believed to be plastoquinone. Couples the redox reaction to proton translocation, and thus conserves the redox energy in a proton gradient. Cyanobacterial NDH-1 also plays a role in inorganic carbon-concentration. In Crocosphaera subtropica (strain ATCC 51142 / BH68) (Cyanothece sp. (strain ATCC 51142)), this protein is NAD(P)H-quinone oxidoreductase subunit 2.